The sequence spans 155 residues: MLKQVEIFTDGSCLGNPGPGGYGAILRYRGHEKTFSAGYTRTTNNRMELMAAIVALEALKEHCEVILSTDSQYVRQGITQWIHNWKKRGWKTADKKPVKNVDLWQRLDAALGQHQIKWEWVKGHAGHPENERCDELARAAAMNPTLEDTGYQVEV.

Positions 1-142 (MLKQVEIFTD…CDELARAAAM (142 aa)) constitute an RNase H type-1 domain. 4 residues coordinate Mg(2+): Asp10, Glu48, Asp70, and Asp134.

It belongs to the RNase H family. Monomer. Mg(2+) serves as cofactor.

It is found in the cytoplasm. It catalyses the reaction Endonucleolytic cleavage to 5'-phosphomonoester.. Endonuclease that specifically degrades the RNA of RNA-DNA hybrids. This Escherichia coli O127:H6 (strain E2348/69 / EPEC) protein is Ribonuclease H.